Here is a 129-residue protein sequence, read N- to C-terminus: Follitropin subunit beta (129 aa).

The signal sequence occupies residues 1–20 (MKTLQFFFLFCCWKAICCNS). 6 disulfides stabilise this stretch: Cys21–Cys69, Cys35–Cys84, Cys38–Cys122, Cys46–Cys100, Cys50–Cys102, and Cys105–Cys112. Residues Asn25 and Asn42 are each glycosylated (N-linked (GlcNAc...) asparagine).

The protein belongs to the glycoprotein hormones subunit beta family. As to quaternary structure, heterodimer. The active follitropin is a heterodimer composed of an alpha chain/CGA shared with other hormones and a unique beta chain/FSHB shown here.

The protein localises to the secreted. Together with the alpha chain CGA constitutes follitropin, the follicle-stimulating hormone, and provides its biological specificity to the hormone heterodimer. Binds FSHR, a G protein-coupled receptor, on target cells to activate downstream signaling pathways. Follitropin is involved in follicle development and spermatogenesis in reproductive organs. In Gorilla gorilla gorilla (Western lowland gorilla), this protein is Follitropin subunit beta (FSHB).